A 58-amino-acid polypeptide reads, in one-letter code: UPF0337 protein OB2685 (58 aa).

Basic and acidic residues-rich tracts occupy residues 1 to 22 and 30 to 46; these read MSDG…EAKD and DPQR…KGEA. Residues 1–58 form a disordered region; it reads MSDGMKDKAKAIGKKIKGEAKDQWGSATDDPQRKAEGKRDKAKGEAQDTIADAKNNNK.

Belongs to the UPF0337 (CsbD) family.

The polypeptide is UPF0337 protein OB2685 (Oceanobacillus iheyensis (strain DSM 14371 / CIP 107618 / JCM 11309 / KCTC 3954 / HTE831)).